A 94-amino-acid chain; its full sequence is Small ribosomal subunit protein eS24 (94 aa).

This sequence belongs to the eukaryotic ribosomal protein eS24 family.

This Nanoarchaeum equitans (strain Kin4-M) protein is Small ribosomal subunit protein eS24.